The sequence spans 655 residues: FYVE, RhoGEF and PH domain-containing protein 2 (655 aa).

3 positions are modified to phosphoserine: Ser10, Ser39, and Ser47. Disordered regions lie at residues 21–52 and 84–103; these read NRTP…EPWE and WRRS…EPEE. Over residues 32–41 the composition is skewed to basic and acidic residues; that stretch reads SLEDQPHSPE. In terms of domain architecture, DH spans 102 to 290; that stretch reads EEKRVVRELL…FSAAQHSNAA (189 aa). Residues 319 to 418 form the PH 1 domain; the sequence is TLLREGPVLK…WMQACQAAID (100 aa). Residues 458-518 form an FYVE-type zinc finger; it reads DKMVTMCMRC…VCLTCYTFLT (61 aa). Cys464, Cys467, Cys481, Cys484, Cys489, Cys492, Cys510, and Cys513 together coordinate Zn(2+). The 98-residue stretch at 544–641 folds into the PH 2 domain; sequence QSLVCSFLQL…WVTAIKRAAS (98 aa). Thr644 bears the Phosphothreonine mark. At Ser654 the chain carries Phosphoserine.

Lymph node, spleen, B-lymphocytes and macrophages (at protein level). Expressed at high levels in lymph node, spleen, B-lymphocytes and bone marrow macrophages. Expressed at lower levels in mature bone marrow dendritic cells. In both immature and mature B-cells, expression is down-regulated by prior B-cell receptor signaling. Expression remains high in resting B and memory cells but declines upon differentiation into plasma cells.

The protein resides in the cytoplasm. It localises to the nucleus. Its subcellular location is the early endosome. The protein localises to the early endosome membrane. It is found in the cell projection. The protein resides in the ruffle membrane. It localises to the cytoskeleton. In terms of biological role, activates CDC42, a member of the Ras-like family of Rho- and Rac proteins, by exchanging bound GDP for free GTP. Activates JNK1 via CDC42 but not RAC1. Binds to phosphatidylinositol 4,5-bisphosphate, phosphatidylinositol 3,4,5-trisphosphate, phosphatidylinositol 5-monophosphate, phosphatidylinositol 4-monophosphate and phosphatidylinositol 3-monophosphate. The polypeptide is FYVE, RhoGEF and PH domain-containing protein 2 (Fgd2) (Mus musculus (Mouse)).